The sequence spans 227 residues: Dephospho-CoA kinase (227 aa).

Residues 31–227 form the DPCK domain; the sequence is KIGLTGGIGS…EKLFQFINCL (197 aa). 39-44 is a binding site for ATP; that stretch reads GSGKST.

It belongs to the CoaE family.

It is found in the cytoplasm. The catalysed reaction is 3'-dephospho-CoA + ATP = ADP + CoA + H(+). Its pathway is cofactor biosynthesis; coenzyme A biosynthesis; CoA from (R)-pantothenate: step 5/5. In terms of biological role, catalyzes the phosphorylation of the 3'-hydroxyl group of dephosphocoenzyme A to form coenzyme A. The polypeptide is Dephospho-CoA kinase (Clostridium tetani (strain Massachusetts / E88)).